The chain runs to 157 residues: Protein Smg homolog (157 aa).

Belongs to the Smg family.

This Shewanella loihica (strain ATCC BAA-1088 / PV-4) protein is Protein Smg homolog.